A 386-amino-acid polypeptide reads, in one-letter code: Succinyl-diaminopimelate desuccinylase (386 aa).

His-77 contacts Zn(2+). The active site involves Asp-79. Residue Asp-110 coordinates Zn(2+). Glu-144 functions as the Proton acceptor in the catalytic mechanism. Zn(2+) contacts are provided by Glu-145, Glu-173, and His-359.

It belongs to the peptidase M20A family. DapE subfamily. In terms of assembly, homodimer. The cofactor is Zn(2+). It depends on Co(2+) as a cofactor.

The enzyme catalyses N-succinyl-(2S,6S)-2,6-diaminopimelate + H2O = (2S,6S)-2,6-diaminopimelate + succinate. It functions in the pathway amino-acid biosynthesis; L-lysine biosynthesis via DAP pathway; LL-2,6-diaminopimelate from (S)-tetrahydrodipicolinate (succinylase route): step 3/3. Functionally, catalyzes the hydrolysis of N-succinyl-L,L-diaminopimelic acid (SDAP), forming succinate and LL-2,6-diaminopimelate (DAP), an intermediate involved in the bacterial biosynthesis of lysine and meso-diaminopimelic acid, an essential component of bacterial cell walls. The protein is Succinyl-diaminopimelate desuccinylase of Methylibium petroleiphilum (strain ATCC BAA-1232 / LMG 22953 / PM1).